The primary structure comprises 751 residues: Cyanobacterial phytochrome B (751 aa).

Cys17 contributes to the a tetrapyrrole binding site. Residues 22-511 form a chromophore binding domain region; sequence IHIPGLIQPH…RSAIIGIVLQ (490 aa). The GAF domain maps to 152 to 320; sequence TTTEISQILA…MTSVEMSAKE (169 aa). Residues 536-751 form the Histidine kinase domain; it reads IASHDLKEPL…STFYFTLQDV (216 aa). Residue His539 is modified to Phosphohistidine; by autocatalysis.

It in the N-terminal section; belongs to the phytochrome family. In terms of processing, contains one covalently linked tetrapyrrole chromophore.

The enzyme catalyses ATP + protein L-histidine = ADP + protein N-phospho-L-histidine.. Its function is as follows. Photoreceptor which exists in two forms that are reversibly interconvertible by light: the R form that absorbs maximally in the red region of the spectrum and the FR form that absorbs maximally in the far-red region. The chain is Cyanobacterial phytochrome B (bphB) from Nostoc sp. (strain PCC 7120 / SAG 25.82 / UTEX 2576).